Reading from the N-terminus, the 111-residue chain is MIGQRIKQYRKEKGYSLSELAEKAGVAKSYLSSIERNLQTNPSIQFLEKVSAVLDVSVHTLLDEKHETEYDGQLDSEWEKLVRDAMTSGVSKKQFREFLDYQKWRKSQKEE.

In terms of domain architecture, HTH cro/C1-type spans 6–61; it reads IKQYRKEKGYSLSELAEKAGVAKSYLSSIERNLQTNPSIQFLEKVSAVLDVSVHTL. The H-T-H motif DNA-binding region spans 17–36; it reads LSELAEKAGVAKSYLSSIER. The 39-residue stretch at 65–103 folds into the Sin domain; that stretch reads KHETEYDGQLDSEWEKLVRDAMTSGVSKKQFREFLDYQK.

In terms of assembly, homotetramer in the absence of SinI. Heterodimer with SinI. Interaction with SinI disrupts the SinR tetramer and its repressor activity. Interacts with hpr.

Its function is as follows. Negative as well as positive regulator of alternate developmental processes that are induced at the end of vegetative growth in response to nutrient depletion. Binds to the alkaline protease (aprE) gene at two sites. Also acts as a repressor of the key sporulation gene spo0A. Negatively regulates transcription of the eps operon, which is responsible for the biosynthesis of an exopolysaccharide involved in biofilm formation; therefore it could govern the transition between a state in which bacteria swim or swarm and a state in which bacteria assemble into multicellular communities. Acts with Hpr as a corepressor of epr expression. Also negatively regulates transcription of the lutABC operon, which is required for lactate utilization. Repressor activity is regulated by SinI. This is HTH-type transcriptional regulator SinR (sinR) from Bacillus subtilis (strain 168).